The sequence spans 171 residues: Nudix hydrolase DR_0079 (171 aa).

Residues 32 to 162 enclose the Nudix hydrolase domain; that stretch reads ERVRVVNAFL…EAAKGDLAEL (131 aa). Residues 69–91 carry the Nudix box motif; the sequence is GGAVQSGETYEEAFRREAREELN. The Mg(2+) site is built by glutamate 85 and glutamate 89.

This sequence belongs to the Nudix hydrolase family. In terms of assembly, monomer. The cofactor is Mg(2+).

Inhibited by zinc, calcium or copper ions. Its function is as follows. Hydrolase that converts various nucleotide triphosphates (NTPs) to the corresponding nucleotide monophosphates and diphosphate, and nucleotide diphosphates to nucleotide monophosphates and inorganic phosphate. Has a marked preference for cytosine ribonucleoside 5'-diphosphate (CDP) and cytosine ribonucleoside 5'-triphosphate (CTP). Has lower activity towards the deoxyribose nucleotides dCDP and dCTP, and towards dGDP, TDP and UDP. This chain is Nudix hydrolase DR_0079, found in Deinococcus radiodurans (strain ATCC 13939 / DSM 20539 / JCM 16871 / CCUG 27074 / LMG 4051 / NBRC 15346 / NCIMB 9279 / VKM B-1422 / R1).